Reading from the N-terminus, the 521-residue chain is Acetylcholine receptor subunit delta (521 aa).

Positions 1–21 (MAWIWISLLLPILIYFPGCFS) are cleaved as a signal peptide. Over 22–247 (ESEEERLLNH…ITFYLIIERK (226 aa)) the chain is Extracellular. N-linked (GlcNAc...) asparagine glycans are attached at residues Asn-53 and Asn-164. Cys-151 and Cys-165 are joined by a disulfide. Helical transmembrane passes span 248–272 (PLFY…VFYL), 280–297 (MTLA…LLLI), and 314–335 (YLMF…VLNL). At 336 to 475 (HFRTPSTHAI…WYRIARTVDR (140 aa)) the chain is on the cytoplasmic side. Tyr-394 is modified (phosphotyrosine; by Tyr-kinases). Residues 476–494 (LCLFLVTPVMIIGTLWIFL) traverse the membrane as a helical segment.

The protein belongs to the ligand-gated ion channel (TC 1.A.9) family. Acetylcholine receptor (TC 1.A.9.1) subfamily. Pentamer of two alpha chains, and one each of the beta, delta, and gamma (in immature muscle) or epsilon (in mature muscle) chains.

It localises to the postsynaptic cell membrane. The protein localises to the cell membrane. It carries out the reaction K(+)(in) = K(+)(out). The catalysed reaction is Na(+)(in) = Na(+)(out). Its function is as follows. After binding acetylcholine, the AChR responds by an extensive change in conformation that affects all subunits and leads to opening of an ion-conducting channel across the plasma membrane. This Xenopus laevis (African clawed frog) protein is Acetylcholine receptor subunit delta (chrnd).